The following is a 258-amino-acid chain: uncharacterized protein (258 aa).

This is an uncharacterized protein from Caenorhabditis elegans.